A 396-amino-acid chain; its full sequence is MIISAASDYRAAAQRILPPFLFHYMDGGAYSEYTLHRNVEDLSEVALRQRILKNMSDLSLETTLFNEKLSMPVALGPVGLCGMYARRGEVQAAKAADAHGIPFTLSTVSVCPIEEVAPAIKRPMWFQLYVLRDRGFMRNALERAKAAGCSTLVFTVDMPTPGARYRDAHSGMSGPNAAMRRYLQAVTHPQWAWDVGLNGRPHDLGNISAYLGKPTGLEDYIGWLGNNFDPSISWKDLEWIRDFWDGPMVIKGILDPEDARDAVRFGADGIVVSNHGGRQLDGVLSSARALPAIADAVKGDIAILADSGIRNGLDVVRMIALGADTVLLGRAFLYALATAGQAGVANLLNLIEKEMKVAMTLTGAKSISEITQDSLVQGLGKELPAALAPMAKGNAA.

Residues 1 to 380 (MIISAASDYR…TQDSLVQGLG (380 aa)) enclose the FMN hydroxy acid dehydrogenase domain. Substrate is bound at residue tyrosine 24. FMN contacts are provided by serine 106 and glutamine 127. Tyrosine 129 lines the substrate pocket. An FMN-binding site is contributed by threonine 155. Substrate is bound at residue arginine 164. Residue lysine 251 participates in FMN binding. The Proton acceptor role is filled by histidine 275. Substrate is bound at residue arginine 278. 306-330 (DSGIRNGLDVVRMIALGADTVLLGR) serves as a coordination point for FMN.

The protein belongs to the FMN-dependent alpha-hydroxy acid dehydrogenase family. Requires FMN as cofactor.

The protein resides in the cell inner membrane. The catalysed reaction is (S)-lactate + A = pyruvate + AH2. Functionally, catalyzes the conversion of L-lactate to pyruvate. Is coupled to the respiratory chain. This Escherichia coli O127:H6 (strain E2348/69 / EPEC) protein is L-lactate dehydrogenase.